A 100-amino-acid polypeptide reads, in one-letter code: Esterase PE11 (100 aa).

A PE domain is found at valine 4–asparagine 94.

This sequence belongs to the mycobacterial PE family.

Its subcellular location is the secreted. It localises to the cell wall. The enzyme catalyses an acetyl ester + H2O = an aliphatic alcohol + acetate + H(+). It carries out the reaction a butanoate ester + H2O = an aliphatic alcohol + butanoate + H(+). It catalyses the reaction an octanoate ester + H2O = an aliphatic alcohol + octanoate + H(+). In terms of biological role, involved in cell wall lipids remodeling and in virulence. Restricts the biofilm growth and is essential for the optimal intracellular survival of M.tuberculosis. Shows esterase activity with a preference for short-chain esters, particularly pNP-acetate (C2) and pNP-butyrate (C4). Has weaker activity with pNP-octanoate (C8), pNP-laurate (C12) and pNP-myristate (C14). Shows weak long-chain triacylglycerol (TAG) hydrolase activity in vitro. Not necessary for PPE17 stability or for its localization on the mycobacterial surface. This Mycobacterium tuberculosis (strain ATCC 25618 / H37Rv) protein is Esterase PE11.